Here is a 543-residue protein sequence, read N- to C-terminus: 2,3-bisphosphoglycerate-independent phosphoglycerate mutase (543 aa).

Mn(2+)-binding residues include Asp24 and Ser74. The active-site Phosphoserine intermediate is the Ser74. Substrate is bound by residues His135, 165 to 166 (RD), Arg197, Arg203, 268 to 271 (RPDR), and Lys341. Residues Asp408, His412, Asp449, His450, and His467 each contribute to the Mn(2+) site.

It belongs to the BPG-independent phosphoglycerate mutase family. As to quaternary structure, monomer. Mn(2+) is required as a cofactor.

The enzyme catalyses (2R)-2-phosphoglycerate = (2R)-3-phosphoglycerate. It participates in carbohydrate degradation; glycolysis; pyruvate from D-glyceraldehyde 3-phosphate: step 3/5. Its function is as follows. Catalyzes the interconversion of 2-phosphoglycerate and 3-phosphoglycerate. The sequence is that of 2,3-bisphosphoglycerate-independent phosphoglycerate mutase from Parasynechococcus marenigrum (strain WH8102).